A 111-amino-acid polypeptide reads, in one-letter code: Cell division protein FtsB (111 aa).

The Cytoplasmic portion of the chain corresponds to 1–3; that stretch reads MRL. The helical transmembrane segment at 4 to 21 threads the bilayer; the sequence is LFLVLLVLLGLIQYPLWL. Residues 22-111 are Periplasmic-facing; it reads GKGGWFKVWD…PGQTASAPRR (90 aa). The stretch at 31–62 forms a coiled coil; the sequence is DLQRQVAAQHETNDGLRARNAALEAEVRDLAT. Residues 88–111 are disordered; sequence VPPGTPVPQPAPGAPGQTASAPRR. The span at 90 to 100 shows a compositional bias: pro residues; it reads PGTPVPQPAPG. The span at 101 to 111 shows a compositional bias: low complexity; that stretch reads APGQTASAPRR.

It belongs to the FtsB family. In terms of assembly, part of a complex composed of FtsB, FtsL and FtsQ.

The protein resides in the cell inner membrane. In terms of biological role, essential cell division protein. May link together the upstream cell division proteins, which are predominantly cytoplasmic, with the downstream cell division proteins, which are predominantly periplasmic. The polypeptide is Cell division protein FtsB (Bordetella petrii (strain ATCC BAA-461 / DSM 12804 / CCUG 43448)).